The sequence spans 134 residues: Proline-rich protein 4 (134 aa).

The first 16 residues, 1-16 (MLLVLLSVVLLALSSA), serve as a signal peptide directing secretion. Residues 28–134 (FTFTIPDVED…ARHPQEQPLW (107 aa)) form a disordered region. The span at 47–59 (QRPPPEGLLPRPP) shows a compositional bias: pro residues. A compositionally biased stretch (polar residues) spans 110 to 119 (VSLQEASSFF). The span at 120 to 134 (QRDRPARHPQEQPLW) shows a compositional bias: basic and acidic residues.

In terms of tissue distribution, abundantly expressed in lacrimal gland where it is found in the acinar cells but not in the intralobular ducts. Also found in the submandibular gland, the parotid and sublingual glands.

The protein resides in the secreted. The sequence is that of Proline-rich protein 4 (PRR4) from Homo sapiens (Human).